Here is a 450-residue protein sequence, read N- to C-terminus: IMP-specific 5'-nucleotidase 1 (450 aa).

His144 is an ATP binding site. Catalysis depends on Asp172, which acts as the Nucleophile. Residues Asp172, Asp174, Asp180, Thr208, Asp376, and Lys384 each contribute to the IMP site. The Mg(2+) site is built by Asp172 and Asp174. The active-site Proton donor is the Asp174. Position 411 (Asp411) interacts with Mg(2+).

It belongs to the ISN1 family. As to quaternary structure, homotetramer. Requires Mg(2+) as cofactor.

The enzyme catalyses IMP + H2O = inosine + phosphate. With respect to regulation, allosterically activated by ATP. ATP binding is a prerequisite to magnesium and substrate binding. ATP binds to 2 of the subunits in the homotetramer inducing a closure of these 2 subunits and the release of the C-terminal loop, thereby activating the enzyme. Functionally, IMP-specific 5'-nucleotidase involved in IMP (inosine 5'-phosphate) degradation. In Saccharomyces cerevisiae (strain ATCC 204508 / S288c) (Baker's yeast), this protein is IMP-specific 5'-nucleotidase 1 (ISN1).